A 735-amino-acid polypeptide reads, in one-letter code: Stonin-1 (735 aa).

The segment at 1–35 is disordered; it reads MCSTNPGKWVTFDDDPAVQSSQKSKNFPLENQGVC. The region spanning 275 to 408 is the SHD domain; the sequence is GWSFMLRIPE…KLPAVSKPKK (134 aa). Residues 412-715 enclose the MHD domain; it reads EQEISLEIVD…ACYNIQVEIE (304 aa).

This sequence belongs to the Stoned B family. Ubiquitous.

The protein resides in the cytoplasm. The protein localises to the membrane. In terms of biological role, may be involved in the endocytic machinery. This chain is Stonin-1 (STON1), found in Homo sapiens (Human).